The sequence spans 384 residues: S-adenosylmethionine synthase (384 aa).

Position 15 (H15) interacts with ATP. Mg(2+) is bound at residue D17. E43 lines the K(+) pocket. L-methionine contacts are provided by E56 and Q99. Residues 99-109 are flexible loop; sequence QSPDINQGVDR. Residues 164-166, 230-231, D239, 245-246, A262, and K266 contribute to the ATP site; these read DAK, RF, and RK. D239 provides a ligand contact to L-methionine. K270 contacts L-methionine.

It belongs to the AdoMet synthase family. Homotetramer; dimer of dimers. Mg(2+) serves as cofactor. K(+) is required as a cofactor.

Its subcellular location is the cytoplasm. The catalysed reaction is L-methionine + ATP + H2O = S-adenosyl-L-methionine + phosphate + diphosphate. The protein operates within amino-acid biosynthesis; S-adenosyl-L-methionine biosynthesis; S-adenosyl-L-methionine from L-methionine: step 1/1. In terms of biological role, catalyzes the formation of S-adenosylmethionine (AdoMet) from methionine and ATP. The overall synthetic reaction is composed of two sequential steps, AdoMet formation and the subsequent tripolyphosphate hydrolysis which occurs prior to release of AdoMet from the enzyme. In Klebsiella pneumoniae subsp. pneumoniae (strain ATCC 700721 / MGH 78578), this protein is S-adenosylmethionine synthase.